The chain runs to 674 residues: Sterile alpha motif domain-containing protein 15 (674 aa).

Over residues 1 to 18 (MAEVPEDYDSGPDEDGEL) the composition is skewed to acidic residues. The interval 1 to 448 (MAEVPEDYDS…LEHREPKRGK (448 aa)) is disordered. 3 stretches are compositionally biased toward basic and acidic residues: residues 87-142 (IAKE…EEAK), 195-223 (ESLR…KLGE), and 236-274 (TKPE…KSSE). The segment covering 276–290 (AGLEPPEETQPEVPE) has biased composition (acidic residues). 4 stretches are compositionally biased toward basic and acidic residues: residues 291–322 (EMQR…KSTD), 330–346 (EEIK…KTNE), 354–372 (EMMK…EKKN), and 391–429 (VEEK…EPIK). Residues 545–608 (WDPEEVAEWI…SRHTQELLEI (64 aa)) form the SAM domain.

This chain is Sterile alpha motif domain-containing protein 15 (SAMD15), found in Homo sapiens (Human).